A 443-amino-acid polypeptide reads, in one-letter code: Phosphoglucosamine mutase (443 aa).

Ser-102 serves as the catalytic Phosphoserine intermediate. Mg(2+) is bound by residues Ser-102, Asp-241, Asp-243, and Asp-245. Phosphoserine is present on Ser-102.

This sequence belongs to the phosphohexose mutase family. Mg(2+) is required as a cofactor. In terms of processing, activated by phosphorylation.

It carries out the reaction alpha-D-glucosamine 1-phosphate = D-glucosamine 6-phosphate. In terms of biological role, catalyzes the conversion of glucosamine-6-phosphate to glucosamine-1-phosphate. This Polaromonas naphthalenivorans (strain CJ2) protein is Phosphoglucosamine mutase.